The primary structure comprises 504 residues: ATP synthase subunit beta (504 aa).

181–188 (GGAGVGKT) provides a ligand contact to ATP.

This sequence belongs to the ATPase alpha/beta chains family. F-type ATPases have 2 components, CF(1) - the catalytic core - and CF(0) - the membrane proton channel. CF(1) has five subunits: alpha(3), beta(3), gamma(1), delta(1), epsilon(1). CF(0) has three main subunits: a(1), b(2) and c(9-12). The alpha and beta chains form an alternating ring which encloses part of the gamma chain. CF(1) is attached to CF(0) by a central stalk formed by the gamma and epsilon chains, while a peripheral stalk is formed by the delta and b chains.

The protein localises to the cell inner membrane. The catalysed reaction is ATP + H2O + 4 H(+)(in) = ADP + phosphate + 5 H(+)(out). Its function is as follows. Produces ATP from ADP in the presence of a proton gradient across the membrane. The catalytic sites are hosted primarily by the beta subunits. This chain is ATP synthase subunit beta, found in Ehrlichia ruminantium (strain Welgevonden).